We begin with the raw amino-acid sequence, 361 residues long: Ribosomal RNA large subunit methyltransferase M (361 aa).

Residues Ser-187, 220 to 223 (CPGG), Asp-239, Asp-259, and Asp-276 each bind S-adenosyl-L-methionine. Residue Lys-305 is the Proton acceptor of the active site.

The protein belongs to the class I-like SAM-binding methyltransferase superfamily. RNA methyltransferase RlmE family. RlmM subfamily. Monomer.

It is found in the cytoplasm. The catalysed reaction is cytidine(2498) in 23S rRNA + S-adenosyl-L-methionine = 2'-O-methylcytidine(2498) in 23S rRNA + S-adenosyl-L-homocysteine + H(+). In terms of biological role, catalyzes the 2'-O-methylation at nucleotide C2498 in 23S rRNA. The sequence is that of Ribosomal RNA large subunit methyltransferase M from Shewanella sp. (strain ANA-3).